We begin with the raw amino-acid sequence, 394 residues long: Elongation factor Tu (394 aa).

The tr-type G domain maps to 10–204; that stretch reads KPHVNVGTIG…ALDSYIPEPQ (195 aa). A G1 region spans residues 19 to 26; the sequence is GHVDHGKT. 19–26 serves as a coordination point for GTP; the sequence is GHVDHGKT. Thr26 contacts Mg(2+). The segment at 60–64 is G2; sequence GITIN. The segment at 81–84 is G3; that stretch reads DCPG. Residues 81–85 and 136–139 each bind GTP; these read DCPGH and NKCD. The interval 136 to 139 is G4; the sequence is NKCD. A G5 region spans residues 174–176; it reads SAL.

Belongs to the TRAFAC class translation factor GTPase superfamily. Classic translation factor GTPase family. EF-Tu/EF-1A subfamily. Monomer.

It localises to the cytoplasm. It catalyses the reaction GTP + H2O = GDP + phosphate + H(+). Functionally, GTP hydrolase that promotes the GTP-dependent binding of aminoacyl-tRNA to the A-site of ribosomes during protein biosynthesis. The sequence is that of Elongation factor Tu from Shewanella baltica (strain OS185).